We begin with the raw amino-acid sequence, 96 residues long: Co-chaperonin GroES (96 aa).

Belongs to the GroES chaperonin family. As to quaternary structure, heptamer of 7 subunits arranged in a ring. Interacts with the chaperonin GroEL.

It localises to the cytoplasm. Functionally, together with the chaperonin GroEL, plays an essential role in assisting protein folding. The GroEL-GroES system forms a nano-cage that allows encapsulation of the non-native substrate proteins and provides a physical environment optimized to promote and accelerate protein folding. GroES binds to the apical surface of the GroEL ring, thereby capping the opening of the GroEL channel. In Shewanella pealeana (strain ATCC 700345 / ANG-SQ1), this protein is Co-chaperonin GroES.